Consider the following 124-residue polypeptide: uncharacterized protein (124 aa).

The signal sequence occupies residues 1–19; sequence MRLLVQKVILIYLARYAKS. A run of 2 helical transmembrane segments spans residues 37–57 and 86–108; these read IAEFLWVYVGSALAYVVGVKF and LGALALITIARAFCVAHINIIII.

It is found in the membrane. This is an uncharacterized protein from Saccharomyces cerevisiae (strain ATCC 204508 / S288c) (Baker's yeast).